Consider the following 367-residue polypeptide: Flagellar P-ring protein (367 aa).

The N-terminal stretch at 1–22 (MRRMLVIRWILAIHLIATQVFA) is a signal peptide.

Belongs to the FlgI family. In terms of assembly, the basal body constitutes a major portion of the flagellar organelle and consists of four rings (L,P,S, and M) mounted on a central rod.

It is found in the periplasm. Its subcellular location is the bacterial flagellum basal body. Assembles around the rod to form the L-ring and probably protects the motor/basal body from shearing forces during rotation. This is Flagellar P-ring protein from Legionella pneumophila subsp. pneumophila (strain Philadelphia 1 / ATCC 33152 / DSM 7513).